The primary structure comprises 356 residues: Histidinol-phosphate aminotransferase (356 aa).

The residue at position 214 (Lys214) is an N6-(pyridoxal phosphate)lysine.

This sequence belongs to the class-II pyridoxal-phosphate-dependent aminotransferase family. Histidinol-phosphate aminotransferase subfamily. In terms of assembly, homodimer. Pyridoxal 5'-phosphate serves as cofactor.

It carries out the reaction L-histidinol phosphate + 2-oxoglutarate = 3-(imidazol-4-yl)-2-oxopropyl phosphate + L-glutamate. The protein operates within amino-acid biosynthesis; L-histidine biosynthesis; L-histidine from 5-phospho-alpha-D-ribose 1-diphosphate: step 7/9. The sequence is that of Histidinol-phosphate aminotransferase from Shigella sonnei (strain Ss046).